Here is a 660-residue protein sequence, read N- to C-terminus: uncharacterized protein (660 aa).

Positions 1–660 (MGTPCQSARG…RNPGCPRTWR (660 aa)) are disordered. Positions 67–80 (RPGGGNRVGAGRGR) are enriched in gly residues. Over residues 104–116 (SNPTGGCSDPQRS) the composition is skewed to polar residues. Tandem repeats lie at residues 149–273 (SARN…GCPR), 274–398 (SARN…GCPR), 399–523 (SARN…GCPR), and 524–648 (SARN…GCPR). Positions 149–648 (SARNPGCPRT…THRRPPGCPR (500 aa)) are 4 X 125 AA tandem repeats. 4 stretches are compositionally biased toward low complexity: residues 177–196 (RPSGPTGGRPAAPGAPGTPA), 302–321 (RPSGPTGGRPAAPGAPGTPA), 427–446 (RPSGPTGGRPAAPGAPGTPA), and 552–571 (RPSGPTGGRPAAPGAPGTPA).

This is an uncharacterized protein from Homo sapiens (Human).